The following is a 179-amino-acid chain: Bifunctional protein PyrR (179 aa).

The PRPP-binding signature appears at 99–111 (VILIDDVLYTGRT).

This sequence belongs to the purine/pyrimidine phosphoribosyltransferase family. PyrR subfamily. In terms of assembly, homodimer and homohexamer; in equilibrium.

It carries out the reaction UMP + diphosphate = 5-phospho-alpha-D-ribose 1-diphosphate + uracil. In terms of biological role, regulates transcriptional attenuation of the pyrimidine nucleotide (pyr) operon by binding in a uridine-dependent manner to specific sites on pyr mRNA. This disrupts an antiterminator hairpin in the RNA and favors formation of a downstream transcription terminator, leading to a reduced expression of downstream genes. Its function is as follows. Also displays a weak uracil phosphoribosyltransferase activity which is not physiologically significant. The protein is Bifunctional protein PyrR of Latilactobacillus sakei subsp. sakei (strain 23K) (Lactobacillus sakei subsp. sakei).